A 264-amino-acid chain; its full sequence is Glutamate racemase (264 aa).

Residues 10–11 and 42–43 each bind substrate; these read DS and YG. The active-site Proton donor/acceptor is Cys73. Substrate is bound at residue 74–75; it reads NT. Cys181 functions as the Proton donor/acceptor in the catalytic mechanism. 182–183 serves as a coordination point for substrate; that stretch reads TH.

The protein belongs to the aspartate/glutamate racemases family.

It carries out the reaction L-glutamate = D-glutamate. It participates in cell wall biogenesis; peptidoglycan biosynthesis. In terms of biological role, provides the (R)-glutamate required for cell wall biosynthesis. In Thermoanaerobacter sp. (strain X514), this protein is Glutamate racemase.